Consider the following 206-residue polypeptide: uncharacterized protein (206 aa).

It localises to the plastid. Its subcellular location is the cyanelle. This is an uncharacterized protein from Cyanophora paradoxa.